The chain runs to 216 residues: Orotate phosphoribosyltransferase (216 aa).

Lysine 30 contacts 5-phospho-alpha-D-ribose 1-diphosphate. 38 to 39 provides a ligand contact to orotate; sequence FF. Residues 75-76, arginine 102, lysine 103, lysine 106, histidine 108, and 128-136 contribute to the 5-phospho-alpha-D-ribose 1-diphosphate site; these read YK and DDVITAGTA. Orotate contacts are provided by threonine 132 and arginine 160.

The protein belongs to the purine/pyrimidine phosphoribosyltransferase family. PyrE subfamily. As to quaternary structure, homodimer. Mg(2+) is required as a cofactor.

It catalyses the reaction orotidine 5'-phosphate + diphosphate = orotate + 5-phospho-alpha-D-ribose 1-diphosphate. Its pathway is pyrimidine metabolism; UMP biosynthesis via de novo pathway; UMP from orotate: step 1/2. Its function is as follows. Catalyzes the transfer of a ribosyl phosphate group from 5-phosphoribose 1-diphosphate to orotate, leading to the formation of orotidine monophosphate (OMP). This is Orotate phosphoribosyltransferase from Acinetobacter baumannii (strain ACICU).